The chain runs to 267 residues: Centromere protein Q (267 aa).

Composition is skewed to basic residues over residues 1–22 (MSGKARASRKKPQQVKRSLKQR) and 39–49 (KRNRSHAKHLS). Positions 1 to 54 (MSGKARASRKKPQQVKRSLKQRANKEADLPENEVGNTAKRNRSHAKHLSSKVTG) are disordered. At Ser49 the chain carries Phosphoserine. Residues 100–202 (IKRKEEIQCH…EEQEVKQVFH (103 aa)) adopt a coiled-coil conformation.

This sequence belongs to the CENP-Q/OKP1 family. Component of the CENPA-CAD complex, composed of CENPI, CENPK, CENPL, CENPO, CENPP, CENPQ, CENPR and CENPS. The CENPA-CAD complex interacts with the CENPA-NAC complex, at least composed of CENPA, CENPC, CENPH, CENPM, CENPN, CENPT and CENPU. Post-translationally, phosphorylation at Ser-49 is essential for CENPE recruitment to kinetochores and orderly chromosome congression.

It localises to the nucleus. The protein localises to the chromosome. It is found in the centromere. In terms of biological role, component of the CENPA-CAD (nucleosome distal) complex, a complex recruited to centromeres which is involved in assembly of kinetochore proteins, mitotic progression and chromosome segregation. May be involved in incorporation of newly synthesized CENPA into centromeres via its interaction with the CENPA-NAC complex. Plays an important role in chromosome congression and in the recruitment of CENP-O complex (which comprises CENPO, CENPP, CENPQ and CENPU), CENPE and PLK1 to the kinetochores. The protein is Centromere protein Q (Cenpq) of Mus musculus (Mouse).